The primary structure comprises 131 residues: Lysozyme C (131 aa).

The C-type lysozyme domain occupies 2-131; that stretch reads KIYEQCELAR…VSQWIKGCKL (130 aa). 4 disulfides stabilise this stretch: Cys-7–Cys-129, Cys-31–Cys-117, Cys-66–Cys-82, and Cys-78–Cys-96. Catalysis depends on residues Glu-36 and Asp-54.

The protein belongs to the glycosyl hydrolase 22 family. Monomer.

It is found in the secreted. The enzyme catalyses Hydrolysis of (1-&gt;4)-beta-linkages between N-acetylmuramic acid and N-acetyl-D-glucosamine residues in a peptidoglycan and between N-acetyl-D-glucosamine residues in chitodextrins.. In terms of biological role, lysozymes have primarily a bacteriolytic function; those in tissues and body fluids are associated with the monocyte-macrophage system and enhance the activity of immunoagents. Has strong bacteriolytic activity against M.luteus and V.cholerae, weak bacteriolytic activity against P.aeruginosa and no activity against A.hydrophila. The protein is Lysozyme C (LYZ) of Pelodiscus sinensis (Chinese softshell turtle).